The sequence spans 455 residues: uncharacterized protein (455 aa).

3 N-linked (GlcNAc...) asparagine glycosylation sites follow: Asn42, Asn49, and Asn70. The next 4 helical transmembrane spans lie at 127-147, 153-173, 177-197, and 377-397; these read AILI…TWIF, SLLD…MFRI, ICAL…ITYY, and YKFC…EIIF. The N-linked (GlcNAc...) asparagine glycan is linked to Asn403.

It is found in the membrane. This is an uncharacterized protein from Caenorhabditis elegans.